The chain runs to 333 residues: 4-hydroxy-3-methylbut-2-enyl diphosphate reductase (333 aa).

C20 is a binding site for [4Fe-4S] cluster. H49 and H85 together coordinate (2E)-4-hydroxy-3-methylbut-2-enyl diphosphate. Dimethylallyl diphosphate contacts are provided by H49 and H85. 2 residues coordinate isopentenyl diphosphate: H49 and H85. Position 107 (C107) interacts with [4Fe-4S] cluster. Residue H135 participates in (2E)-4-hydroxy-3-methylbut-2-enyl diphosphate binding. H135 serves as a coordination point for dimethylallyl diphosphate. H135 serves as a coordination point for isopentenyl diphosphate. E137 acts as the Proton donor in catalysis. (2E)-4-hydroxy-3-methylbut-2-enyl diphosphate is bound at residue T176. C206 provides a ligand contact to [4Fe-4S] cluster. (2E)-4-hydroxy-3-methylbut-2-enyl diphosphate-binding residues include S234, S235, N236, and S279. The dimethylallyl diphosphate site is built by S234, S235, N236, and S279. Residues S234, S235, N236, and S279 each contribute to the isopentenyl diphosphate site.

This sequence belongs to the IspH family. [4Fe-4S] cluster serves as cofactor.

It catalyses the reaction isopentenyl diphosphate + 2 oxidized [2Fe-2S]-[ferredoxin] + H2O = (2E)-4-hydroxy-3-methylbut-2-enyl diphosphate + 2 reduced [2Fe-2S]-[ferredoxin] + 2 H(+). It carries out the reaction dimethylallyl diphosphate + 2 oxidized [2Fe-2S]-[ferredoxin] + H2O = (2E)-4-hydroxy-3-methylbut-2-enyl diphosphate + 2 reduced [2Fe-2S]-[ferredoxin] + 2 H(+). The protein operates within isoprenoid biosynthesis; dimethylallyl diphosphate biosynthesis; dimethylallyl diphosphate from (2E)-4-hydroxy-3-methylbutenyl diphosphate: step 1/1. It participates in isoprenoid biosynthesis; isopentenyl diphosphate biosynthesis via DXP pathway; isopentenyl diphosphate from 1-deoxy-D-xylulose 5-phosphate: step 6/6. In terms of biological role, catalyzes the conversion of 1-hydroxy-2-methyl-2-(E)-butenyl 4-diphosphate (HMBPP) into a mixture of isopentenyl diphosphate (IPP) and dimethylallyl diphosphate (DMAPP). Acts in the terminal step of the DOXP/MEP pathway for isoprenoid precursor biosynthesis. This chain is 4-hydroxy-3-methylbut-2-enyl diphosphate reductase, found in Rhizobium johnstonii (strain DSM 114642 / LMG 32736 / 3841) (Rhizobium leguminosarum bv. viciae).